The sequence spans 465 residues: 3-isopropylmalate dehydratase large subunit (465 aa).

[4Fe-4S] cluster-binding residues include cysteine 346, cysteine 406, and cysteine 409.

This sequence belongs to the aconitase/IPM isomerase family. LeuC type 1 subfamily. In terms of assembly, heterodimer of LeuC and LeuD. The cofactor is [4Fe-4S] cluster.

The catalysed reaction is (2R,3S)-3-isopropylmalate = (2S)-2-isopropylmalate. Its pathway is amino-acid biosynthesis; L-leucine biosynthesis; L-leucine from 3-methyl-2-oxobutanoate: step 2/4. Functionally, catalyzes the isomerization between 2-isopropylmalate and 3-isopropylmalate, via the formation of 2-isopropylmaleate. The chain is 3-isopropylmalate dehydratase large subunit from Psychromonas ingrahamii (strain DSM 17664 / CCUG 51855 / 37).